A 212-amino-acid chain; its full sequence is Interleukin-6 (212 aa).

A signal peptide spans Met-1–Pro-29. Cys-72 and Cys-78 are oxidised to a cystine. N-linked (GlcNAc...) asparagine glycosylation occurs at Asn-73. Ser-81 carries the phosphoserine modification. A disulfide bond links Cys-101 and Cys-111. N-linked (GlcNAc...) asparagine glycosylation is found at Asn-160 and Asn-172.

Belongs to the IL-6 superfamily. In terms of assembly, component of a hexamer of two molecules each of IL6, IL6R and IL6ST; first binds to IL6R to associate with the signaling subunit IL6ST. Interacts with IL6R (via the N-terminal ectodomain); this interaction may be affected by IL6R-binding with SORL1, hence decreasing IL6 cis signaling. Interacts with SORL1 (via the N-terminal ectodomain); this interaction leads to IL6 internalization and lysosomal degradation. May form a trimeric complex with the soluble SORL1 ectodomain and soluble IL6R receptor; this interaction might stabilize circulating IL6, hence promoting IL6 trans signaling.

Its subcellular location is the secreted. In terms of biological role, cytokine with a wide variety of biological functions in immunity, tissue regeneration, and metabolism. Binds to IL6R, then the complex associates to the signaling subunit IL6ST/gp130 to trigger the intracellular IL6-signaling pathway. The interaction with the membrane-bound IL6R and IL6ST stimulates 'classic signaling', whereas the binding of IL6 and soluble IL6R to IL6ST stimulates 'trans-signaling'. Alternatively, 'cluster signaling' occurs when membrane-bound IL6:IL6R complexes on transmitter cells activate IL6ST receptors on neighboring receiver cells. Its function is as follows. IL6 is a potent inducer of the acute phase response. Rapid production of IL6 contributes to host defense during infection and tissue injury, but excessive IL6 synthesis is involved in disease pathology. In the innate immune response, is synthesized by myeloid cells, such as macrophages and dendritic cells, upon recognition of pathogens through toll-like receptors (TLRs) at the site of infection or tissue injury. In the adaptive immune response, is required for the differentiation of B cells into immunoglobulin-secreting cells. Plays a major role in the differentiation of CD4(+) T cell subsets. Essential factor for the development of T follicular helper (Tfh) cells that are required for the induction of germinal-center formation. Required to drive naive CD4(+) T cells to the Th17 lineage. Also required for proliferation of myeloma cells and the survival of plasmablast cells. Functionally, acts as an essential factor in bone homeostasis and on vessels directly or indirectly by induction of VEGF, resulting in increased angiogenesis activity and vascular permeability. Induces, through 'trans-signaling' and synergistically with IL1B and TNF, the production of VEGF. Involved in metabolic controls, is discharged into the bloodstream after muscle contraction increasing lipolysis and improving insulin resistance. 'Trans-signaling' in central nervous system also regulates energy and glucose homeostasis. Mediates, through GLP-1, crosstalk between insulin-sensitive tissues, intestinal L cells and pancreatic islets to adapt to changes in insulin demand. Also acts as a myokine. Plays a protective role during liver injury, being required for maintenance of tissue regeneration. Also has a pivotal role in iron metabolism by regulating HAMP/hepcidin expression upon inflammation or bacterial infection. Through activation of IL6ST-YAP-NOTCH pathway, induces inflammation-induced epithelial regeneration. In Saimiri sciureus (Common squirrel monkey), this protein is Interleukin-6 (IL6).